A 374-amino-acid chain; its full sequence is MPGAVEGPRWKQAEDIRDIYDFRDVLGTGAFSEVILAEDKRTQKLVAIKCIAKKALEGKEGSMENEIAVLHKIKHPNIVALDDIYESGGHLYLIMQLVSGGELFDRIVEKGFYTERDASRLIFQVLDAVKYLHDLGIVHRDLKPENLLYYSLDEDSKIMISDFGLSKMEDPGSVLSTACGTPGYVAPEVLAQKPYSKAVDCWSIGVIAYILLCGYPPFYDENDAKLFEQILKAEYEFDSPYWDDISDSAKDFIRHLMEKDPEKRFTCEQALQHPWIAGDTALDKNIHQSVSEQIKKNFAKSKWKQAFNATAVVRHMRKLQLGTSQEGQGQTASHGELLTPTAGGPAAGCCCRDCCVEPGSELPPAPPPSSRAMD.

One can recognise a Protein kinase domain in the interval 20–276 (YDFRDVLGTG…CEQALQHPWI (257 aa)). Residues 26–34 (LGTGAFSEV) and Lys-49 contribute to the ATP site. A Glycyl lysine isopeptide (Lys-Gly) (interchain with G-Cter in ubiquitin) cross-link involves residue Lys-59. Asp-141 acts as the Proton acceptor in catalysis. Residue Thr-177 is modified to Phosphothreonine; by CaMKK1 and CaMKK2. The Involved in nuclear import signature appears at 263–264 (KR). Positions 276–316 (IAGDTALDKNIHQSVSEQIKKNFAKSKWKQAFNATAVVRHM) are autoinhibitory domain. A calmodulin-binding region spans residues 296–317 (KNFAKSKWKQAFNATAVVRHMR). Residues 315–321 (HMRKLQL) carry the Nuclear export signal motif.

Belongs to the protein kinase superfamily. CAMK Ser/Thr protein kinase family. CaMK subfamily. As to quaternary structure, monomer. Interacts with XPO1. Post-translationally, phosphorylated by CaMKK1 and CaMKK2 on Thr-177. Polybiquitinated by the E3 ubiquitin-protein ligase complex SCF(FBXL12), leading to proteasomal degradation. In terms of tissue distribution, widely expressed.

Its subcellular location is the cytoplasm. It is found in the nucleus. The catalysed reaction is L-seryl-[protein] + ATP = O-phospho-L-seryl-[protein] + ADP + H(+). The enzyme catalyses L-threonyl-[protein] + ATP = O-phospho-L-threonyl-[protein] + ADP + H(+). Its activity is regulated as follows. Activated by Ca(2+)/calmodulin. Binding of calmodulin results in conformational change that relieves intrasteric autoinhibition and allows phosphorylation of Thr-177 within the activation loop by CaMKK1 or CaMKK2. Phosphorylation of Thr-177 results in several fold increase in total activity. Unlike CaMK4, is unable to exhibit autonomous activity after Ca(2+)/calmodulin activation. In terms of biological role, calcium/calmodulin-dependent protein kinase that operates in the calcium-triggered CaMKK-CaMK1 signaling cascade and, upon calcium influx, regulates transcription activators activity, cell cycle, hormone production, cell differentiation, actin filament organization and neurite outgrowth. Recognizes the substrate consensus sequence [MVLIF]-x-R-x(2)-[ST]-x(3)-[MVLIF]. Regulates axonal extension and growth cone motility in hippocampal and cerebellar nerve cells. Upon NMDA receptor-mediated Ca(2+) elevation, promotes dendritic growth in hippocampal neurons and is essential in synapses for full long-term potentiation (LTP) and ERK2-dependent translational activation. Downstream of NMDA receptors, promotes the formation of spines and synapses in hippocampal neurons by phosphorylating ARHGEF7/BETAPIX on 'Ser-516', which results in the enhancement of ARHGEF7 activity and activation of RAC1. Promotes neuronal differentiation and neurite outgrowth by activation and phosphorylation of MARK2 on 'Ser-91', 'Ser-92', 'Ser-93' and 'Ser-294'. Promotes nuclear export of HDAC5 and binding to 14-3-3 by phosphorylation of 'Ser-259' and 'Ser-498' in the regulation of muscle cell differentiation. Regulates NUMB-mediated endocytosis by phosphorylation of NUMB on 'Ser-275' and 'Ser-294'. Involved in the regulation of basal and estrogen-stimulated migration of medulloblastoma cells through ARHGEF7/BETAPIX phosphorylation. Is required for proper activation of cyclin-D1/CDK4 complex during G1 progression in diploid fibroblasts. Plays a role in K(+) and ANG2-mediated regulation of the aldosterone synthase (CYP11B2) to produce aldosterone in the adrenal cortex. Phosphorylates EIF4G3/eIF4GII. In vitro phosphorylates CREB1, ATF1, CFTR, MYL9 and SYN1/synapsin I. This chain is Calcium/calmodulin-dependent protein kinase type 1 (Camk1), found in Rattus norvegicus (Rat).